A 359-amino-acid polypeptide reads, in one-letter code: Bergaptol O-methyltransferase (359 aa).

Histidine 126 lines the bergaptol pocket. Positions 179, 203, 226, 246, and 260 each coordinate S-adenosyl-L-homocysteine. Residue histidine 264 coordinates bergaptol. Catalysis depends on histidine 264, which acts as the Proton acceptor.

This sequence belongs to the class I-like SAM-binding methyltransferase superfamily. Cation-independent O-methyltransferase family. COMT subfamily.

It carries out the reaction a 5-hydroxyfurocoumarin + S-adenosyl-L-methionine = a 5-methoxyfurocoumarin + S-adenosyl-L-homocysteine + H(+). The catalysed reaction is bergaptol + S-adenosyl-L-methionine = bergapten + S-adenosyl-L-homocysteine. Inhibited by Cu(2+), Ni(2+) and Co(2+). In Glehnia littoralis (Beach silvertop), this protein is Bergaptol O-methyltransferase.